A 300-amino-acid chain; its full sequence is Bifunctional protein FolD (300 aa).

NADP(+) contacts are provided by residues 168 to 170, Ser-193, and Ile-234; that span reads GRS.

The protein belongs to the tetrahydrofolate dehydrogenase/cyclohydrolase family. As to quaternary structure, homodimer.

It carries out the reaction (6R)-5,10-methylene-5,6,7,8-tetrahydrofolate + NADP(+) = (6R)-5,10-methenyltetrahydrofolate + NADPH. The catalysed reaction is (6R)-5,10-methenyltetrahydrofolate + H2O = (6R)-10-formyltetrahydrofolate + H(+). Its pathway is one-carbon metabolism; tetrahydrofolate interconversion. Functionally, catalyzes the oxidation of 5,10-methylenetetrahydrofolate to 5,10-methenyltetrahydrofolate and then the hydrolysis of 5,10-methenyltetrahydrofolate to 10-formyltetrahydrofolate. This is Bifunctional protein FolD from Ehrlichia canis (strain Jake).